The following is a 345-amino-acid chain: tRNA-dihydrouridine(20/20a) synthase (345 aa).

FMN-binding positions include 26–28 (PML) and glutamine 78. Cysteine 108 serves as the catalytic Proton donor. FMN is bound by residues lysine 147, histidine 180, 220-222 (NGG), and 242-243 (GR).

The protein belongs to the Dus family. DusA subfamily. FMN serves as cofactor.

The catalysed reaction is 5,6-dihydrouridine(20) in tRNA + NADP(+) = uridine(20) in tRNA + NADPH + H(+). It carries out the reaction 5,6-dihydrouridine(20) in tRNA + NAD(+) = uridine(20) in tRNA + NADH + H(+). The enzyme catalyses 5,6-dihydrouridine(20a) in tRNA + NADP(+) = uridine(20a) in tRNA + NADPH + H(+). It catalyses the reaction 5,6-dihydrouridine(20a) in tRNA + NAD(+) = uridine(20a) in tRNA + NADH + H(+). In terms of biological role, catalyzes the synthesis of 5,6-dihydrouridine (D), a modified base found in the D-loop of most tRNAs, via the reduction of the C5-C6 double bond in target uridines. Specifically modifies U20 and U20a in tRNAs. This is tRNA-dihydrouridine(20/20a) synthase from Yersinia pestis.